The following is a 128-amino-acid chain: Glycine cleavage system H protein (128 aa).

The region spanning 24–106 (VYTVGITEHA…YAEGFLFQIK (83 aa)) is the Lipoyl-binding domain. K65 carries the post-translational modification N6-lipoyllysine.

Belongs to the GcvH family. In terms of assembly, the glycine cleavage system is composed of four proteins: P, T, L and H. (R)-lipoate serves as cofactor.

Its function is as follows. The glycine cleavage system catalyzes the degradation of glycine. The H protein shuttles the methylamine group of glycine from the P protein to the T protein. In Serratia proteamaculans (strain 568), this protein is Glycine cleavage system H protein.